The primary structure comprises 428 residues: Bifunctional protein GlmU (428 aa).

Residues 1-221 (MDIVILAAGC…ERKAMGINTR (221 aa)) are pyrophosphorylase. UDP-N-acetyl-alpha-D-glucosamine-binding positions include 6–9 (LAAG), Lys20, Gln74, 79–80 (GT), 103–105 (YGD), Gly140, and Asn219. Asp105 lines the Mg(2+) pocket. Asn219 provides a ligand contact to Mg(2+). Residues 222–242 (ADLAIAESYFQCMKRASFLQS) form a linker region. The interval 243 to 428 (GVTLTSPDQV…TTKPEYKTRR (186 aa)) is N-acetyltransferase. UDP-N-acetyl-alpha-D-glucosamine-binding residues include Arg308 and Lys326. Catalysis depends on His338, which acts as the Proton acceptor. UDP-N-acetyl-alpha-D-glucosamine contacts are provided by Tyr341 and Asn352. Acetyl-CoA is bound by residues Ala355, 361 to 362 (NY), Ala398, and Arg415.

This sequence in the N-terminal section; belongs to the N-acetylglucosamine-1-phosphate uridyltransferase family. It in the C-terminal section; belongs to the transferase hexapeptide repeat family. As to quaternary structure, homotrimer. Mg(2+) is required as a cofactor.

Its subcellular location is the cytoplasm. It catalyses the reaction alpha-D-glucosamine 1-phosphate + acetyl-CoA = N-acetyl-alpha-D-glucosamine 1-phosphate + CoA + H(+). The enzyme catalyses N-acetyl-alpha-D-glucosamine 1-phosphate + UTP + H(+) = UDP-N-acetyl-alpha-D-glucosamine + diphosphate. The protein operates within nucleotide-sugar biosynthesis; UDP-N-acetyl-alpha-D-glucosamine biosynthesis; N-acetyl-alpha-D-glucosamine 1-phosphate from alpha-D-glucosamine 6-phosphate (route II): step 2/2. It functions in the pathway nucleotide-sugar biosynthesis; UDP-N-acetyl-alpha-D-glucosamine biosynthesis; UDP-N-acetyl-alpha-D-glucosamine from N-acetyl-alpha-D-glucosamine 1-phosphate: step 1/1. It participates in bacterial outer membrane biogenesis; LPS lipid A biosynthesis. Functionally, catalyzes the last two sequential reactions in the de novo biosynthetic pathway for UDP-N-acetylglucosamine (UDP-GlcNAc). The C-terminal domain catalyzes the transfer of acetyl group from acetyl coenzyme A to glucosamine-1-phosphate (GlcN-1-P) to produce N-acetylglucosamine-1-phosphate (GlcNAc-1-P), which is converted into UDP-GlcNAc by the transfer of uridine 5-monophosphate (from uridine 5-triphosphate), a reaction catalyzed by the N-terminal domain. The protein is Bifunctional protein GlmU of Anaplasma marginale (strain Florida).